We begin with the raw amino-acid sequence, 367 residues long: Protein valois (367 aa).

WD repeat units lie at residues 101–139 (QAEHTVNIVRYAEDDFLLVALGDTRLQAWSTYSKVRDSQ), 152–192 (AHPT…MVST), and 198–238 (SHTD…PSST). The tract at residues 309–367 (LAAMSNLPASVKVANVQAGHEFIYTHQDTHSRLTDAVWTDDSTLITIGHGRKMVTHAIK) is interaction with csul.

Interacts with csul and tud. In terms of tissue distribution, in oocytes, localizes to pole plasm and nuage (at protein level). Expressed stronger in the germline than in somatic cells. In the germarium it sometimes concentrates in perinuclear aggregates that disappear by stage 2 of oogenesis. At later stages, it is uniformly distributed in the nurse cells and oocyte, as well as in young embryos, with no particular enrichment at the posterior or inside the pole cells (at protein level).

It localises to the cytoplasm. Functionally, involved in specific localization of cytoplasmic proteins during the formation of pole plasm. Required for synthesis and/or stability of oskar protein (osk) and localization of tudor (tud) in both the nuage and posterior pole of the oocyte. Required for normal posterior localization of osk in later stages of oogenesis and for posterior localization of the vasa (vas) protein during the entire process of pole plasm assembly. May act by regulating the complex that contains the arginine N-methyltransferase csul. This Drosophila melanogaster (Fruit fly) protein is Protein valois (vls).